The sequence spans 221 residues: Jacalin-related lectin 47 (221 aa).

Jacalin-type lectin domains are found at residues 1–64 and 71–217; these read MDSN…YYYP and SEKL…HVLP.

Belongs to the jacalin lectin family.

This Arabidopsis thaliana (Mouse-ear cress) protein is Jacalin-related lectin 47 (JAL47).